A 424-amino-acid polypeptide reads, in one-letter code: Serine--tRNA ligase (424 aa).

232–234 (TAE) lines the L-serine pocket. 263–265 (RQE) serves as a coordination point for ATP. Glu-286 provides a ligand contact to L-serine. 350–353 (EIGS) is an ATP binding site. Position 386 (Ser-386) interacts with L-serine.

The protein belongs to the class-II aminoacyl-tRNA synthetase family. Type-1 seryl-tRNA synthetase subfamily. As to quaternary structure, homodimer. The tRNA molecule binds across the dimer.

It localises to the cytoplasm. The enzyme catalyses tRNA(Ser) + L-serine + ATP = L-seryl-tRNA(Ser) + AMP + diphosphate + H(+). The catalysed reaction is tRNA(Sec) + L-serine + ATP = L-seryl-tRNA(Sec) + AMP + diphosphate + H(+). The protein operates within aminoacyl-tRNA biosynthesis; selenocysteinyl-tRNA(Sec) biosynthesis; L-seryl-tRNA(Sec) from L-serine and tRNA(Sec): step 1/1. In terms of biological role, catalyzes the attachment of serine to tRNA(Ser). Is also able to aminoacylate tRNA(Sec) with serine, to form the misacylated tRNA L-seryl-tRNA(Sec), which will be further converted into selenocysteinyl-tRNA(Sec). In Onion yellows phytoplasma (strain OY-M), this protein is Serine--tRNA ligase.